A 421-amino-acid chain; its full sequence is Forkhead box protein fkh-4 (421 aa).

The fork-head DNA-binding region spans arginine 118–lysine 218.

It localises to the nucleus. Transcription factor. Regulates expression of a class of small RNAs, known as 21U-RNAs, perhaps acting redundantly with fkh-3 and fkh-5. The sequence is that of Forkhead box protein fkh-4 from Caenorhabditis elegans.